A 474-amino-acid chain; its full sequence is tRNA-2-methylthio-N(6)-dimethylallyladenosine synthase (474 aa).

One can recognise an MTTase N-terminal domain in the interval 3 to 120 (KKLHIKTWGC…LPEMINSVRG (118 aa)). [4Fe-4S] cluster is bound by residues Cys-12, Cys-49, Cys-83, Cys-157, Cys-161, and Cys-164. In terms of domain architecture, Radical SAM core spans 143–375 (RAEGPTAFVS…QERINQQAMA (233 aa)). The region spanning 378–441 (RRMLGTTQRI…PNSLRGKVVR (64 aa)) is the TRAM domain.

Belongs to the methylthiotransferase family. MiaB subfamily. Monomer. [4Fe-4S] cluster is required as a cofactor.

It is found in the cytoplasm. The enzyme catalyses N(6)-dimethylallyladenosine(37) in tRNA + (sulfur carrier)-SH + AH2 + 2 S-adenosyl-L-methionine = 2-methylsulfanyl-N(6)-dimethylallyladenosine(37) in tRNA + (sulfur carrier)-H + 5'-deoxyadenosine + L-methionine + A + S-adenosyl-L-homocysteine + 2 H(+). In terms of biological role, catalyzes the methylthiolation of N6-(dimethylallyl)adenosine (i(6)A), leading to the formation of 2-methylthio-N6-(dimethylallyl)adenosine (ms(2)i(6)A) at position 37 in tRNAs that read codons beginning with uridine. In Shigella boydii serotype 18 (strain CDC 3083-94 / BS512), this protein is tRNA-2-methylthio-N(6)-dimethylallyladenosine synthase.